A 418-amino-acid polypeptide reads, in one-letter code: AP-3 complex subunit mu-1 (418 aa).

The MHD domain maps to 176–417 (NNEAYFDVVE…VTKAGKFQVR (242 aa)).

It belongs to the adaptor complexes medium subunit family. In terms of assembly, adaptor protein complex 3 (AP-3) is a heterotetramer composed of two large adaptins (delta-type subunit AP3D1 and beta-type subunit AP3B1 or AP3B2), a medium adaptin (mu-type subunit AP3M1 or AP3M2) and a small adaptin (sigma-type subunit APS1 or AP3S2). Interacts with AGAP1. AP-3 associates with the BLOC-1 complex.

It is found in the golgi apparatus. Its subcellular location is the cytoplasmic vesicle membrane. Functionally, part of the AP-3 complex, an adaptor-related complex which is not clathrin-associated. The complex is associated with the Golgi region as well as more peripheral structures. It facilitates the budding of vesicles from the Golgi membrane and may be directly involved in trafficking to lysosomes. In concert with the BLOC-1 complex, AP-3 is required to target cargos into vesicles assembled at cell bodies for delivery into neurites and nerve terminals. The sequence is that of AP-3 complex subunit mu-1 (AP3M1) from Bos taurus (Bovine).